The primary structure comprises 79 residues: NLKVLAVFVLCAILVVVTAERRGTETGGYKKDTLEDLKKRTHDCFDSFKEATCHMAKTNRLCKTSAKYQINCKKTCGLC.

An N-terminal signal peptide occupies residues 1–19 (NLKVLAVFVLCAILVVVTA). A propeptide spanning residues 20–37 (ERRGTETGGYKKDTLEDL) is cleaved from the precursor. Residues 44-79 (CFDSFKEATCHMAKTNRLCKTSAKYQINCKKTCGLC) enclose the ShKT domain. Disulfide bonds link Cys44–Cys79, Cys53–Cys72, and Cys62–Cys76. The segment at 67–68 (KY) is crucial for binding to potassium channels.

It belongs to the sea anemone type 1 potassium channel toxin family. Type 1b subfamily.

The protein localises to the secreted. The protein resides in the nematocyst. Functionally, inhibits voltage-gated potassium channels (Kv1/KCNA). In Anemonia viridis (Snakelocks anemone), this protein is U-actitoxin-Avd9d.